The primary structure comprises 507 residues: Rhomboid protease GluP (507 aa).

5 helical membrane passes run 179–199 (FTYL…INGG), 229–249 (IVLH…WSVG), 261–281 (FLLI…VFSP), 283–303 (PSAG…YVAL), and 312–332 (TIGT…FAVS). The active-site Nucleophile is the Ser288. His339 acts as the Charge relay system in catalysis. The next 2 helical transmembrane spans lie at 340–360 (IGGL…KAGA) and 365–385 (LLSA…GLHS). 2 TPR repeats span residues 424–457 (ADLL…EPKD) and 458–491 (HASY…KPKE).

This sequence belongs to the peptidase S54 family.

It is found in the cell membrane. The catalysed reaction is Cleaves type-1 transmembrane domains using a catalytic dyad composed of serine and histidine that are contributed by different transmembrane domains.. Inhibited by dichloroisocoumarin (DCI) and N-p-tosyl-L-phenylalanine chloromethyl ketone (TPCK), but not by other serine protease inhibitors such as sulfonyl fluoride PMSF and 4-(2-aminoethyl)benzenesulfonyl fluoride (AEBSF). Rhomboid-type serine protease that catalyzes intramembrane proteolysis. Important for normal cell division and sporulation. May act as a glucose exporter. This is Rhomboid protease GluP (gluP) from Bacillus subtilis (strain 168).